The following is a 282-amino-acid chain: Bis(5'-nucleosyl)-tetraphosphatase, symmetrical (282 aa).

The protein belongs to the Ap4A hydrolase family.

The enzyme catalyses P(1),P(4)-bis(5'-adenosyl) tetraphosphate + H2O = 2 ADP + 2 H(+). In terms of biological role, hydrolyzes diadenosine 5',5'''-P1,P4-tetraphosphate to yield ADP. The polypeptide is Bis(5'-nucleosyl)-tetraphosphatase, symmetrical (Salmonella paratyphi C (strain RKS4594)).